The chain runs to 355 residues: Thiamine thiazole synthase, chloroplastic (355 aa).

Residues 1-42 (MAAMATTASSLLKTSFAGARLPAAARNPTVSVAPRTGGAICN) constitute a chloroplast transit peptide. Residues A96, 116–117 (EQ), G124, and V189 contribute to the substrate site. C218 carries the 2,3-didehydroalanine (Cys) modification. Residues D220, H235, M287, and 297–299 (RMG) each bind substrate.

This sequence belongs to the THI4 family. Homooctamer. Fe cation is required as a cofactor. Post-translationally, during the catalytic reaction, a sulfide is transferred from Cys-218 to a reaction intermediate, generating a dehydroalanine residue.

Its subcellular location is the plastid. The protein resides in the chloroplast. It catalyses the reaction [ADP-thiazole synthase]-L-cysteine + glycine + NAD(+) = [ADP-thiazole synthase]-dehydroalanine + ADP-5-ethyl-4-methylthiazole-2-carboxylate + nicotinamide + 3 H2O + 2 H(+). Functionally, involved in biosynthesis of the thiamine precursor thiazole. Catalyzes the conversion of NAD and glycine to adenosine diphosphate 5-(2-hydroxyethyl)-4-methylthiazole-2-carboxylic acid (ADT), an adenylated thiazole intermediate. The reaction includes an iron-dependent sulfide transfer from a conserved cysteine residue of the protein to a thiazole intermediate. The enzyme can only undergo a single turnover, which suggests it is a suicide enzyme. May have additional roles in adaptation to various stress conditions and in DNA damage tolerance. Required fot thiamine accumulation and disease resistance toward the bacterial pathogen Xanthomonas oryzae pv oryzae (Xoo) and the fungal pathogen Magnaporthe oryzae. During infection by Xoo, functions positively in the defense pathway initiated by the resistance genes XA3 and XA26 by promoting thiamine synthesis. May function upstream of the defense-related proteins peroxidases, phenylalanine ammonia-lyases and pathogenesis-related proteins. In terms of biological role, (Microbial infection) During infection by Xanthomonas oryzae pv oryzae (Xoo), THI1 interacts with the type III effector virulence factor xadA from Xoo, which is an adhesin-like outer membrane protein. This probably attenuates the function of THI1 in defense response. The polypeptide is Thiamine thiazole synthase, chloroplastic (Oryza sativa subsp. japonica (Rice)).